Here is a 506-residue protein sequence, read N- to C-terminus: MTEHLPASQVSFDENALIAERRAKLLALRAQGVVYPNDVKREHYAADVQAAFANVETWTAETLEASSHRVRMAGRLMAKRLMGKASFAQIQDESGRIQLLIQSNVLGEDSYAAFKVLDVGDIIAVEGGLTRTRTGELSVKVNVLRLLTKALRPLPDKWHGLTDVEQRYRQRYVDLIVTPESREIFIKRSKIIRALRTWLDARLFLEVETPMMHYIPGGAAAKPFVTYHNALDLELYLRVAPELYLKRLVVGGLERVYEINRNFRNEGVSTRHNPEFTMLELYEAYSTYHEVMDLAETMIRDTAQSVLGTTQVIWDGAQIDLGPIFRRWRMDEAVCHHNPEISVAECTDRDALLLHCERLKIKVKSSYGWGRLLLSIFEATVEHTLIQPTFITDHPVEISPLARESDIESGYTDRFELFINGKEIANGFSELNDPEEQAMRFQKQVEAKEGGDDEAMYYDADYIRALEYGMAPTGGLGIGVDRLVMLLTGSTSIRDVLLFPYMRPER.

Mg(2+) is bound by residues Glu-416 and Glu-423.

Belongs to the class-II aminoacyl-tRNA synthetase family. In terms of assembly, homodimer. Mg(2+) serves as cofactor.

It localises to the cytoplasm. The catalysed reaction is tRNA(Lys) + L-lysine + ATP = L-lysyl-tRNA(Lys) + AMP + diphosphate. The polypeptide is Lysine--tRNA ligase (Xylella fastidiosa (strain M12)).